The primary structure comprises 1113 residues: Sterol regulatory element binding protein sbp-1 (1113 aa).

Residues 1–52 (MNEEFEGDVPMSDPFLSLVTKLDDIAPFPNNDPLDFDMEHNWQEPGPSQQPD) form a transcriptional activation (acidic) region. 4 disordered regions span residues 24–68 (DIAP…EYYD), 101–132 (LGGG…TSPP), 206–274 (SPYD…SPQN), and 290–345 (EVER…SQGT). The segment covering 229–238 (PHHHHHHPMP) has biased composition (basic residues). The span at 324–337 (AEGDEDEDDEDSDS) shows a compositional bias: acidic residues. The interval 355-368 (ERRTAHNLIEKKYR) is basic motif. One can recognise a bHLH domain in the interval 355-405 (ERRTAHNLIEKKYRCSINDRIQQLKVLLCGDEAKLSKSATLRRAIEHIEEV). Residues 369–405 (CSINDRIQQLKVLLCGDEAKLSKSATLRRAIEHIEEV) form a helix-loop-helix motif region. The stretch at 395–422 (LRRAIEHIEEVEHENQVLKHHVEQMRKT) forms a coiled coil. The interval 437–472 (TEYSARSPVESSPSPPRNERKRSRMSTTTPMKNGTR) is disordered. The next 2 helical transmembrane spans lie at 478–498 (VTLF…LLAG) and 541–561 (MSYV…KLLI).

Post-translationally, processed in the Golgi apparatus, releasing the protein from the membrane. In terms of processing, ubiquitinated; the nuclear form has a rapid turnover and is rapidly ubiquitinated and degraded by the proteasome in the nucleus. In terms of tissue distribution, broadly expressed, including many cells in the head. Expressed in the intestine.

It localises to the nucleus. The protein localises to the endoplasmic reticulum membrane. Transcription factor involved in maintaining normal fat levels. Regulates the expression of genes involved in lipid metabolism in response to nutrient availability, such as the fatty-acid desaturases fat-5, fat-6 and fat-7. In response to a high-glucose diet, promotes fatty acid synthesis, elongation and desaturation, acting in concert with transcription factor mxl-3. Plays a role in synthesis of monomethyl branched-chain fatty acids (mmBCFAs) as well as other very-long-chain fatty acids. Downstream of the cis-Golgi membrane protein eas-1/GOLT1B and the E3 ubiquitin ligase rnf-145/RNF145, plays a role in the regulation of glial size, perhaps by modulating synthesis of long-chain polyunsaturated fatty-acids (LC-PUFA). Modulates expression of genes in the one-carbon cycle, which produces the methyl donor S-adenosylmethionine (SAM). Probably involved in a feedback loop in which decreased levels of SAM lead to increased transcriptional activity of sbp-1, thereby causing lipid accumulation. Involved in the negative regulation of zinc homeostasis. Involved in the response to simulated microgravity, in concert with Mediator complex subunit mdt-15, probably acting in the intestine. Plays a role in transgenerational lipid accumulation in response to a high-fat diet, probably acting by upregulating wdr-5.1 expression to increase the level of trimethylated 'Lys-4' histone H3 (H3K4me3), which may then induce the expression of fat-5, fat-6 and fat-7. May act as an oxygen sensor for lipid metabolism. Its function is as follows. Precursor of the transcription factor form, which is embedded in the endoplasmic reticulum membrane. Processing of this form allows release of the transcription factor form that translocates into the nucleus and activates transcription of genes involved in sterol biosynthesis and lipid homeostasis. Functionally, key transcription factor that regulates expression of genes involved in sterol biosynthesis and lipid homeostasis. This is Sterol regulatory element binding protein sbp-1 from Caenorhabditis elegans.